Here is a 518-residue protein sequence, read N- to C-terminus: Protein translocase subunit SecD (518 aa).

6 helical membrane-spanning segments follow: residues 9–29, 361–381, 384–404, 406–426, 452–474, and 486–506; these read IFLS…NFMQ, LIGF…LGLF, IALS…QATL, LPGI…NVLI, FATI…IFGV, and IGII…IDIW.

It belongs to the SecD/SecF family. SecD subfamily. Forms a complex with SecF. Part of the essential Sec protein translocation apparatus which comprises SecA, SecYEG and auxiliary proteins SecDF-YajC and YidC.

It localises to the cell inner membrane. Its function is as follows. Part of the Sec protein translocase complex. Interacts with the SecYEG preprotein conducting channel. SecDF uses the proton motive force (PMF) to complete protein translocation after the ATP-dependent function of SecA. The polypeptide is Protein translocase subunit SecD (Rickettsia conorii (strain ATCC VR-613 / Malish 7)).